Here is a 1412-residue protein sequence, read N- to C-terminus: DNA-directed RNA polymerase subunit beta' (1412 aa).

Positions 543, 545, and 547 each coordinate Mg(2+). Residues Cys1017, Cys1092, Cys1099, and Cys1102 each contribute to the Zn(2+) site.

Belongs to the RNA polymerase beta' chain family. In terms of assembly, the RNAP catalytic core consists of 2 alpha, 1 beta, 1 beta' and 1 omega subunit. When a sigma factor is associated with the core the holoenzyme is formed, which can initiate transcription. Requires Mg(2+) as cofactor. Zn(2+) is required as a cofactor.

The catalysed reaction is RNA(n) + a ribonucleoside 5'-triphosphate = RNA(n+1) + diphosphate. In terms of biological role, DNA-dependent RNA polymerase catalyzes the transcription of DNA into RNA using the four ribonucleoside triphosphates as substrates. This is DNA-directed RNA polymerase subunit beta' from Mesomycoplasma hyopneumoniae (strain 7448) (Mycoplasma hyopneumoniae).